Consider the following 503-residue polypeptide: Aspartyl/glutamyl-tRNA(Asn/Gln) amidotransferase subunit B (503 aa).

It belongs to the GatB/GatE family. GatB subfamily. Heterotrimer of A, B and C subunits.

It carries out the reaction L-glutamyl-tRNA(Gln) + L-glutamine + ATP + H2O = L-glutaminyl-tRNA(Gln) + L-glutamate + ADP + phosphate + H(+). It catalyses the reaction L-aspartyl-tRNA(Asn) + L-glutamine + ATP + H2O = L-asparaginyl-tRNA(Asn) + L-glutamate + ADP + phosphate + 2 H(+). In terms of biological role, allows the formation of correctly charged Asn-tRNA(Asn) or Gln-tRNA(Gln) through the transamidation of misacylated Asp-tRNA(Asn) or Glu-tRNA(Gln) in organisms which lack either or both of asparaginyl-tRNA or glutaminyl-tRNA synthetases. The reaction takes place in the presence of glutamine and ATP through an activated phospho-Asp-tRNA(Asn) or phospho-Glu-tRNA(Gln). The polypeptide is Aspartyl/glutamyl-tRNA(Asn/Gln) amidotransferase subunit B (Nocardia farcinica (strain IFM 10152)).